A 586-amino-acid chain; its full sequence is Homothallic switching endonuclease (586 aa).

The 156-residue stretch at 215–370 (MLGLWLGDST…IVHISRSLGM (156 aa)) folds into the DOD-type homing endonuclease domain.

Post-translationally, rapidly degraded via the ubiquitin-26S proteasome system through two ubiquitin-conjugating enzymes UBC2/RAD6 and UBC3/CDC34.

It is found in the nucleus. In terms of biological role, initiation of mating type interconversion. This protein is a site-specific endonuclease that cleaves a site in the mat locus on chromosome III. The double-strand break is followed by a unidirectional gene conversion event that replaces the information at the mat locus by information copied from either of the two homologous loci (HMR and HML) that reside at the extremity of the chromosome III. Endonuclease expression takes place in late G1 just before cells enter S phase. This is Homothallic switching endonuclease (HO) from Saccharomyces cerevisiae (strain ATCC 204508 / S288c) (Baker's yeast).